The chain runs to 666 residues: MEGAKLSAVRIAVREAPYRQFLGRREPSVVQFPPWSDGKSLIVDQNEFHFDHAFPATISQDEMYQALILPLVDKLLEGFQCTALAYGQTGTGKSYSMGMTPPGEILPEHLGILPRALGDIFERVTARQENNKDAIQVYASFIEIYNEKPFDLLGSTPHMPMVAARCQRCTCLPLHSQADLHHILELGTRNRRVRPTNMNSNSSRSHAIVTIHVKSKTHHSRMNIVDLAGSEGVRRTGHEGVARQEGVNINLGLLSINKVVMSMAAGHTVIPYRDSVLTTVLQASLTAQSYLTFLACISPHQCDLSETLSTLRFGTSAKKLRLNPMQVARQKQSLAARTTHVFRQALCTSTAIKSNAANHNSIVVPKSKYSTTKPLSAVLHRTRSELGMTPKAKKRARELLELEETTLELSSIHIQDSSLSLLGFHSDSDKDRHLMPPPTGQEPRQASSQNSTLMGIVEETEPKESSKVQQSMVAPTVPTTVRCQLFNTTISPISLRASSSQRELSGIQPMEETVVASPQQPCLRRSVRLASSMRSQNYGAIPKVMNLRRSTRLAGIREHATSVVVKNETDAIPHLRSTVQKKRTRNVKPAPKAWMANNTKCFLDLLNNGNVKQLQEIPGIGPKSAFSLALHRSRLGCFENLFQVKSLPIWSGNKWERFCQINCLDT.

In terms of domain architecture, Kinesin motor spans 8 to 320; that stretch reads AVRIAVREAP…LRFGTSAKKL (313 aa). 87–94 contacts ATP; sequence GQTGTGKS. Residues 423–450 are disordered; that stretch reads GFHSDSDKDRHLMPPPTGQEPRQASSQN. A coiled-coil region spans residues 639-666; it reads ENLFQVKSLPIWSGNKWERFCQINCLDT.

It belongs to the TRAFAC class myosin-kinesin ATPase superfamily. Kinesin family. As to expression, in adult female, found in meiotically active ovaries.

The protein localises to the cytoplasm. It localises to the cytoskeleton. Its function is as follows. Required for the distributive chromosome segregation of non-exchange chromosomes during meiosis. May be a microtubule motor required to hold distributively 'paired' chromosomes at the metaphase plate until anaphase. This Drosophila melanogaster (Fruit fly) protein is Kinesin-like protein Nod (nod).